The following is an 854-amino-acid chain: uncharacterized protein (854 aa).

Belongs to the PEP-utilizing enzyme family.

This is an uncharacterized protein from Mycobacterium tuberculosis (strain CDC 1551 / Oshkosh).